Here is a 1068-residue protein sequence, read N- to C-terminus: Carbamoyl phosphate synthase large chain (1068 aa).

The interval 1-401 (MPLNKDIKKV…AFLKGTRSLE (401 aa)) is carboxyphosphate synthetic domain. ATP is bound by residues R129, R169, G175, G176, K208, V210, E215, G241, I242, H243, Q284, and E298. In terms of domain architecture, ATP-grasp 1 spans 133-327 (RNVMSRINEP…IAKVASKIAL (195 aa)). Mg(2+)-binding residues include Q284, E298, and N300. Positions 284, 298, and 300 each coordinate Mn(2+). Residues 402-549 (IGKYSLEHKK…YSTYDVYDEV (148 aa)) are oligomerization domain. Residues 550 to 932 (EVSKNKKVIV…ALYKGFIGAN (383 aa)) form a carbamoyl phosphate synthetic domain region. Positions 674–864 (DELLEKLKIA…IVDIATRVML (191 aa)) constitute an ATP-grasp 2 domain. Residues R710, K749, L751, E755, G780, V781, H782, S783, Q823, and E835 each contribute to the ATP site. Q823, E835, and N837 together coordinate Mg(2+). Q823, E835, and N837 together coordinate Mn(2+). An MGS-like domain is found at 933 to 1068 (ISIKKEKGTV…ETLYIFDLSN (136 aa)). The allosteric domain stretch occupies residues 933–1068 (ISIKKEKGTV…ETLYIFDLSN (136 aa)).

The protein belongs to the CarB family. Composed of two chains; the small (or glutamine) chain promotes the hydrolysis of glutamine to ammonia, which is used by the large (or ammonia) chain to synthesize carbamoyl phosphate. Tetramer of heterodimers (alpha,beta)4. Requires Mg(2+) as cofactor. Mn(2+) is required as a cofactor.

The catalysed reaction is hydrogencarbonate + L-glutamine + 2 ATP + H2O = carbamoyl phosphate + L-glutamate + 2 ADP + phosphate + 2 H(+). The enzyme catalyses hydrogencarbonate + NH4(+) + 2 ATP = carbamoyl phosphate + 2 ADP + phosphate + 2 H(+). It participates in amino-acid biosynthesis; L-arginine biosynthesis; carbamoyl phosphate from bicarbonate: step 1/1. Its pathway is pyrimidine metabolism; UMP biosynthesis via de novo pathway; (S)-dihydroorotate from bicarbonate: step 1/3. Large subunit of the glutamine-dependent carbamoyl phosphate synthetase (CPSase). CPSase catalyzes the formation of carbamoyl phosphate from the ammonia moiety of glutamine, carbonate, and phosphate donated by ATP, constituting the first step of 2 biosynthetic pathways, one leading to arginine and/or urea and the other to pyrimidine nucleotides. The large subunit (synthetase) binds the substrates ammonia (free or transferred from glutamine from the small subunit), hydrogencarbonate and ATP and carries out an ATP-coupled ligase reaction, activating hydrogencarbonate by forming carboxy phosphate which reacts with ammonia to form carbamoyl phosphate. This Clostridium botulinum (strain Langeland / NCTC 10281 / Type F) protein is Carbamoyl phosphate synthase large chain.